A 621-amino-acid chain; its full sequence is ATP-dependent lipid A-core flippase (621 aa).

5 helical membrane-spanning segments follow: residues 32–52, 91–111, 192–212, 286–306, and 312–332; these read IVAALIAIFGVAATESYLAAF, VWGTENKIWTVPLFLIILVVI, IVLLYLNWQLSLIVVLMFPLL, SPFSELIASIALAVVIFIALW, and YTTIGEFMAFIVAMLQMYAPI. Residues 33–344 form the ABC transmembrane type-1 domain; sequence VAALIAIFGV…LANISIPMQT (312 aa). In terms of domain architecture, ABC transporter spans 378 to 611; it reads FRNVDVEYRS…NGYYTMLRNI (234 aa). 410–417 lines the ATP pocket; sequence GRSGSGKS.

It belongs to the ABC transporter superfamily. Lipid exporter (TC 3.A.1.106) family. Homodimer.

It localises to the cell inner membrane. The enzyme catalyses ATP + H2O + lipid A-core oligosaccharideSide 1 = ADP + phosphate + lipid A-core oligosaccharideSide 2.. Its function is as follows. Involved in lipopolysaccharide (LPS) biosynthesis. Translocates lipid A-core from the inner to the outer leaflet of the inner membrane. Transmembrane domains (TMD) form a pore in the inner membrane and the ATP-binding domain (NBD) is responsible for energy generation. The protein is ATP-dependent lipid A-core flippase of Neisseria meningitidis serogroup B (strain ATCC BAA-335 / MC58).